The sequence spans 554 residues: MTRLDNTRVIRPATGTELTAKSWLTEAPLRMLMNNLHPDVAERPEELVVYGGIGRAARDWESYDKIVETLRRLEDDETLLVQSGKPVGVFKTHPDAPRVLIANSNLVPRWATWEHFNELDRKGLAMYGQMTAGSWIYIGAQGIVQGTYETFVEMGRQHHGGDLAGKWLLTAGLGGMGGAQPLAAVMAGASCLAIECQPSRIEMRLRTGYLDKATERLDEALAWIAEANAAKAPVSVGLLGNAAELLPAMFAAGVRPDLLTDQTSAHDPINGYLPAGWTLDQWATAKEREPETVNRAARASMAVHVQAMLDFQAAGVPTVDYGNNIRQMALEEGVKNAFDFPGFVPAYIRPLFCRGIGPFRWAALSGDPEDIAKTDAKVKELIPDNPHLHHWLDMAAEKIKFQGLPARICWVGLGDRHRLGLAFNAMVASGELKAPVVIGRDHLDSGSVASPNRETEAMMDGSDAVSDWPLLNALLNTASGATWVSLHHGGGVGMGFSQHAGMVIVADGTEAAAKRLARVLWNDPASGVMRHADAGYEIAKACAREHGLDLPGIL.

Residues 51–52 (GG), Gln129, 175–177 (GMG), Glu195, Arg200, 241–242 (NA), 262–266 (QTSAH), 272–273 (YL), and Tyr321 each bind NAD(+). Residue Cys409 is part of the active site. Gly491 serves as a coordination point for NAD(+).

This sequence belongs to the urocanase family. NAD(+) is required as a cofactor.

It localises to the cytoplasm. The enzyme catalyses 4-imidazolone-5-propanoate = trans-urocanate + H2O. The protein operates within amino-acid degradation; L-histidine degradation into L-glutamate; N-formimidoyl-L-glutamate from L-histidine: step 2/3. Functionally, catalyzes the conversion of urocanate to 4-imidazolone-5-propionate. The polypeptide is Urocanate hydratase (Caulobacter sp. (strain K31)).